The following is a 232-amino-acid chain: Ribosomal RNA small subunit methyltransferase G (232 aa).

Residues 1–24 are disordered; it reads MVDTALHPIPGRRTPPHPRSTLPL. Residues Gly-91, Leu-96, 142-143, and Arg-160 contribute to the S-adenosyl-L-methionine site; that span reads AE.

It belongs to the methyltransferase superfamily. RNA methyltransferase RsmG family.

It is found in the cytoplasm. Its function is as follows. Specifically methylates the N7 position of guanine in position 518 of 16S rRNA. The sequence is that of Ribosomal RNA small subunit methyltransferase G from Corynebacterium efficiens (strain DSM 44549 / YS-314 / AJ 12310 / JCM 11189 / NBRC 100395).